Reading from the N-terminus, the 420-residue chain is Adenylosuccinate synthetase (420 aa).

GTP contacts are provided by residues 11 to 17 (GDEGKGK) and 39 to 41 (GHT). Aspartate 12 functions as the Proton acceptor in the catalytic mechanism. The Mg(2+) site is built by aspartate 12 and glycine 39. IMP contacts are provided by residues 12–15 (DEGK), 37–40 (NAGH), threonine 129, arginine 143, asparagine 218, threonine 233, and arginine 297. Histidine 40 acts as the Proton donor in catalysis. 293–299 (VTTGRKR) contacts substrate. GTP is bound by residues arginine 299, 325-327 (KLD), and 407-409 (GTG).

This sequence belongs to the adenylosuccinate synthetase family. In terms of assembly, homodimer. It depends on Mg(2+) as a cofactor.

Its subcellular location is the cytoplasm. It catalyses the reaction IMP + L-aspartate + GTP = N(6)-(1,2-dicarboxyethyl)-AMP + GDP + phosphate + 2 H(+). It participates in purine metabolism; AMP biosynthesis via de novo pathway; AMP from IMP: step 1/2. In terms of biological role, plays an important role in the de novo pathway and in the salvage pathway of purine nucleotide biosynthesis. Catalyzes the first committed step in the biosynthesis of AMP from IMP. This Uncinocarpus reesii (strain UAMH 1704) protein is Adenylosuccinate synthetase.